Reading from the N-terminus, the 53-residue chain is MLRYALIFFVIAIIAAVFGFGGIAAGAAEIAKILFYIFVVIFLVTLLLGVVRR.

A run of 2 helical transmembrane segments spans residues 5 to 25 (ALIF…GIAA) and 30 to 50 (IAKI…LLGV).

The protein belongs to the UPF0391 family.

The protein localises to the cell membrane. In Burkholderia multivorans (strain ATCC 17616 / 249), this protein is UPF0391 membrane protein Bmul_5473/BMULJ_06024.